An 89-amino-acid chain; its full sequence is Small ribosomal subunit protein uS15 (89 aa).

The protein belongs to the universal ribosomal protein uS15 family. Part of the 30S ribosomal subunit. Forms a bridge to the 50S subunit in the 70S ribosome, contacting the 23S rRNA.

Functionally, one of the primary rRNA binding proteins, it binds directly to 16S rRNA where it helps nucleate assembly of the platform of the 30S subunit by binding and bridging several RNA helices of the 16S rRNA. Forms an intersubunit bridge (bridge B4) with the 23S rRNA of the 50S subunit in the ribosome. In Staphylococcus carnosus (strain TM300), this protein is Small ribosomal subunit protein uS15.